The primary structure comprises 872 residues: Alanine--tRNA ligase (872 aa).

Zn(2+) is bound by residues histidine 567, histidine 571, cysteine 669, and histidine 673.

Belongs to the class-II aminoacyl-tRNA synthetase family. Zn(2+) is required as a cofactor.

Its subcellular location is the cytoplasm. It carries out the reaction tRNA(Ala) + L-alanine + ATP = L-alanyl-tRNA(Ala) + AMP + diphosphate. In terms of biological role, catalyzes the attachment of alanine to tRNA(Ala) in a two-step reaction: alanine is first activated by ATP to form Ala-AMP and then transferred to the acceptor end of tRNA(Ala). Also edits incorrectly charged Ser-tRNA(Ala) and Gly-tRNA(Ala) via its editing domain. This Streptococcus pyogenes serotype M3 (strain ATCC BAA-595 / MGAS315) protein is Alanine--tRNA ligase.